The primary structure comprises 101 residues: DNA-binding protein Fis (101 aa).

Positions 77–96 (QTRAANMLGINRGTLRKKLK) form a DNA-binding region, H-T-H motif.

It belongs to the transcriptional regulatory Fis family. As to quaternary structure, homodimer.

Functionally, activates ribosomal RNA transcription. Plays a direct role in upstream activation of rRNA promoters. In Shewanella pealeana (strain ATCC 700345 / ANG-SQ1), this protein is DNA-binding protein Fis.